Consider the following 151-residue polypeptide: UPF0756 membrane protein GK2737 (151 aa).

Helical transmembrane passes span 5-25 (VLFL…SLIV), 53-73 (WGVT…EIGF), 79-99 (SLQS…ALIA), and 121-141 (ILAV…AGIA).

It belongs to the UPF0756 family.

The protein resides in the cell membrane. The sequence is that of UPF0756 membrane protein GK2737 from Geobacillus kaustophilus (strain HTA426).